Here is a 195-residue protein sequence, read N- to C-terminus: Pyruvoyl-dependent arginine decarboxylase AaxB (195 aa).

Residue S53 is modified to Pyruvic acid (Ser).

Belongs to the pyruvoyl-dependent arginine decarboxylase family. In terms of assembly, trimer of an alpha-beta dimer. Requires pyruvate as cofactor.

The protein resides in the cytoplasm. The catalysed reaction is L-arginine + H(+) = agmatine + CO2. In terms of biological role, part of the AaxABC system, catalyzes the decarboxylation of L-arginine. The arginine uptake by the bacterium in the macrophage may be a virulence factor against the host innate immune response. This Chlamydia abortus (strain DSM 27085 / S26/3) (Chlamydophila abortus) protein is Pyruvoyl-dependent arginine decarboxylase AaxB (aaxB).